Reading from the N-terminus, the 332-residue chain is Anthranilate phosphoribosyltransferase (332 aa).

5-phospho-alpha-D-ribose 1-diphosphate-binding positions include glycine 79, 82 to 83 (GD), threonine 87, 89 to 92 (NIST), 107 to 115 (KHGNYGATS), and alanine 119. Glycine 79 serves as a coordination point for anthranilate. Serine 91 serves as a coordination point for Mg(2+). Asparagine 110 is a binding site for anthranilate. Anthranilate is bound at residue arginine 165. Residues aspartate 223 and glutamate 224 each contribute to the Mg(2+) site.

Belongs to the anthranilate phosphoribosyltransferase family. Homodimer. Mg(2+) serves as cofactor.

It catalyses the reaction N-(5-phospho-beta-D-ribosyl)anthranilate + diphosphate = 5-phospho-alpha-D-ribose 1-diphosphate + anthranilate. It functions in the pathway amino-acid biosynthesis; L-tryptophan biosynthesis; L-tryptophan from chorismate: step 2/5. Functionally, catalyzes the transfer of the phosphoribosyl group of 5-phosphorylribose-1-pyrophosphate (PRPP) to anthranilate to yield N-(5'-phosphoribosyl)-anthranilate (PRA). The polypeptide is Anthranilate phosphoribosyltransferase (Bacteroides thetaiotaomicron (strain ATCC 29148 / DSM 2079 / JCM 5827 / CCUG 10774 / NCTC 10582 / VPI-5482 / E50)).